We begin with the raw amino-acid sequence, 192 residues long: Putative molybdenum cofactor guanylyltransferase (192 aa).

Residues 8-10, K21, D67, and D101 each bind GTP; that span reads LAG. D101 serves as a coordination point for Mg(2+).

Belongs to the MobA family. Monomer. The cofactor is Mg(2+).

The protein localises to the cytoplasm. It catalyses the reaction Mo-molybdopterin + GTP + H(+) = Mo-molybdopterin guanine dinucleotide + diphosphate. Its function is as follows. Transfers a GMP moiety from GTP to Mo-molybdopterin (Mo-MPT) cofactor (Moco or molybdenum cofactor) to form Mo-molybdopterin guanine dinucleotide (Mo-MGD) cofactor. The sequence is that of Putative molybdenum cofactor guanylyltransferase from Neisseria meningitidis serogroup B (strain ATCC BAA-335 / MC58).